Consider the following 149-residue polypeptide: Cytochrome c-type biogenesis protein CcmE (149 aa).

Residues 1–7 are Cytoplasmic-facing; sequence MKKRHQR. A helical; Signal-anchor for type II membrane protein transmembrane segment spans residues 8 to 28; the sequence is LFLVLGVVAGVSVATALVLNA. Residues 29–149 are Periplasmic-facing; that stretch reads FRDNMTFFIT…EHSVDEVGDY (121 aa). 2 residues coordinate heme: His-123 and Tyr-127.

The protein belongs to the CcmE/CycJ family.

The protein localises to the cell inner membrane. In terms of biological role, heme chaperone required for the biogenesis of c-type cytochromes. Transiently binds heme delivered by CcmC and transfers the heme to apo-cytochromes in a process facilitated by CcmF and CcmH. This chain is Cytochrome c-type biogenesis protein CcmE, found in Halorhodospira halophila (strain DSM 244 / SL1) (Ectothiorhodospira halophila (strain DSM 244 / SL1)).